The following is a 440-amino-acid chain: Glucose-1-phosphate adenylyltransferase (440 aa).

Residues Tyr-125, Gly-190, 205–206 (EK), and Ser-223 contribute to the alpha-D-glucose 1-phosphate site.

It belongs to the bacterial/plant glucose-1-phosphate adenylyltransferase family. Homotetramer.

It carries out the reaction alpha-D-glucose 1-phosphate + ATP + H(+) = ADP-alpha-D-glucose + diphosphate. Its pathway is glycan biosynthesis; glycogen biosynthesis. In terms of biological role, involved in the biosynthesis of ADP-glucose, a building block required for the elongation reactions to produce glycogen. Catalyzes the reaction between ATP and alpha-D-glucose 1-phosphate (G1P) to produce pyrophosphate and ADP-Glc. The polypeptide is Glucose-1-phosphate adenylyltransferase (Dechloromonas aromatica (strain RCB)).